A 344-amino-acid polypeptide reads, in one-letter code: DNA-directed RNA polymerase subunit alpha (344 aa).

The interval 1 to 238 (MKVIKTAPLI…KQLGVFGERP (238 aa)) is alpha N-terminal domain (alpha-NTD). The tract at residues 254–344 (AKDLSAKIES…EKLEDKGGND (91 aa)) is alpha C-terminal domain (alpha-CTD).

The protein belongs to the RNA polymerase alpha chain family. Homodimer. The RNAP catalytic core consists of 2 alpha, 1 beta, 1 beta' and 1 omega subunit. When a sigma factor is associated with the core the holoenzyme is formed, which can initiate transcription.

It carries out the reaction RNA(n) + a ribonucleoside 5'-triphosphate = RNA(n+1) + diphosphate. In terms of biological role, DNA-dependent RNA polymerase catalyzes the transcription of DNA into RNA using the four ribonucleoside triphosphates as substrates. This is DNA-directed RNA polymerase subunit alpha from Helicobacter pylori (strain ATCC 700392 / 26695) (Campylobacter pylori).